A 341-amino-acid polypeptide reads, in one-letter code: Major histocompatibility complex class I-related protein 1 (341 aa).

The first 18 residues, 1–18, serve as a signal peptide directing secretion; sequence MMLLLPLLAVFLVKRSHT. Residues 19–105 form an alpha-1 region; sequence RTHSLRYFRL…RHLQRHYNHS (87 aa). The antigen-binding cleft stretch occupies residues 19-197; the sequence is RTHSLRYFRL…EYGRDTLERT (179 aa). Topologically, residues 19–296 are extracellular; that stretch reads RTHSLRYFRL…APRESGDILR (278 aa). 8-(9H-purin-6-yl)-2-oxa-8-azabicyclo[3.3.1]nona-3,6-diene-4,6-dicarbaldehyde-binding residues include tyrosine 25 and arginine 27. 5-(2-oxoethylideneamino)-6-(D-ribitylamino)uracil contacts are provided by arginine 27, serine 42, and lysine 61. The 5-(2-oxopropylideneamino)-6-(D-ribitylamino)uracil site is built by arginine 27, serine 42, and lysine 61. 3 residues coordinate 7-hydroxy-6-methyl-8-(1-D-ribityl)lumazine: arginine 27, serine 42, and lysine 61. Residues lysine 61 and histidine 76 each contribute to the 8-(9H-purin-6-yl)-2-oxa-8-azabicyclo[3.3.1]nona-3,6-diene-4,6-dicarbaldehyde site. Lysine 61 serves as a coordination point for 2-amino-4-oxopteridine-6-carbaldehyde. Residue lysine 61 participates in pyridoxal binding. N-linked (GlcNAc...) asparagine glycosylation is present at asparagine 103. Residues 106 to 197 form an alpha-2 region; sequence GLHTYQRMIG…EYGRDTLERT (92 aa). Arginine 112 provides a ligand contact to 8-(9H-purin-6-yl)-2-oxa-8-azabicyclo[3.3.1]nona-3,6-diene-4,6-dicarbaldehyde. Residues arginine 112, tyrosine 170, and glutamine 171 each coordinate 5-(2-oxoethylideneamino)-6-(D-ribitylamino)uracil. Arginine 112, tyrosine 170, and glutamine 171 together coordinate 5-(2-oxopropylideneamino)-6-(D-ribitylamino)uracil. 7-hydroxy-6-methyl-8-(1-D-ribityl)lumazine is bound by residues arginine 112, tyrosine 170, and glutamine 171. 2 disulfides stabilise this stretch: cysteine 116-cysteine 179 and cysteine 218-cysteine 274. Residues 198–289 form an alpha-3 region; sequence EHPVVRTTRK…GRQMVLEAPR (92 aa). Positions 200-301 constitute an Ig-like C1-type domain; that stretch reads PVVRTTRKET…GDILRVSTIS (102 aa). The interval 290 to 296 is connecting peptide; the sequence is ESGDILR. A helical transmembrane segment spans residues 297 to 317; it reads VSTISGTTILIIALAGVGVLI. At 318–341 the chain is on the cytoplasmic side; it reads WRRSQELKEVMYQPTQVNEGSSPS.

This sequence belongs to the MHC class I family. As to quaternary structure, heterotrimer that consists of MR1, B2M and metabolite antigen. Major classes of metabolite ligands presented by MR1 include riboflavin-related antigens, pyrimidines and ribityl lumazines, nucleobase adducts and folate derivatives. Forms reversible covalent Schiff base complexes with microbial pyrimidine-based metabolite, which serves as a molecular switch triggering complete folding, stable association with B2M and translocation of the ternary complex from endoplasmic reticulum to the plasma membrane. Alternatively, forms non-Schiff base complexes with ribityl lumazines. On antigen-presenting cells, the ternary complex interacts with TCR on MR1-restricted CD4- or CD8-positive T cell subsets. Interacts with TAPBP and TAPBPL chaperones in the endoplasmic reticulum. TAPBP associated or not with MHC class I peptide loading complex binds ligand-free MR1 or MR1-B2M complex, providing for stable MR1 pools ready for metabolite antigen processing. TAPBPL interacts with MR1 in a ligand-independent way; this interaction may stabilize MR1 pool and facilitate ligand loading and dissociation. Structurally, MR1-B2M heterodimer adopts a topology similar to classical MHC class I molecules, with alpha-1 and alpha-2 domains of MR1 forming the antigen-binding cleft composed of two alpha-helices resting on a floor of 7-stranded anti-parallel beta-pleated sheet. N-glycosylated. As to expression, highly expressed thymus. Expressed in liver, kidney, spleen, heart, brain, lung, skeletal muscle and testis.

It localises to the cell membrane. The protein localises to the endoplasmic reticulum membrane. It is found in the golgi apparatus membrane. The protein resides in the early endosome membrane. Its subcellular location is the late endosome membrane. In terms of biological role, antigen-presenting molecule specialized in displaying microbial pyrimidine-based metabolites to alpha-beta T cell receptors (TCR) on innate-type mucosal-associated invariant T (MAIT) cells. In complex with B2M preferentially presents riboflavin-derived metabolites to semi-invariant TRAV1 TCRs on MAIT cells, guiding immune surveillance of the microbial metabolome at mucosal epithelial barriers. Signature pyrimidine-based microbial antigens are generated via non-enzymatic condensation of metabolite intermediates of the riboflavin pathway with by-products arising from other metabolic pathways such as glycolysis. Typical potent antigenic metabolites are 5-(2-oxoethylideneamino)-6-D-ribitylaminouracil (5-OE-RU) and 5-(2-oxopropylideneamino)-6-D-ribitylaminouracil (5-OP-RU), products of condensation of 5-amino-6-D-ribityaminouracil (5-A-RU) with glyoxal or methylglyoxal by-products, respectively. May present microbial antigens to various TRAV1-negative MAIT cell subsets, providing for unique recognition of diverse microbes, including pathogens that do not synthesize riboflavin. Upon antigen recognition, elicits rapid innate-type MAIT cell activation to eliminate pathogenic microbes by directly killing infected cells. During T cell development, drives thymic selection and post-thymic terminal differentiation of MAIT cells in a process dependent on commensal microflora. Acts as an immune sensor of cancer cell metabolome. May present a tumor-specific or -associated metabolite essential for cancer cell survival to a pan-cancer TCR on a non-MAIT CD8-positive T cell clone, triggering T cell-mediated killing of a wide range of cancer cell types. May present tumor-enriched pyridoxal and pyridoxal 5'-phosphate antigens, enabling preferential recognition of cancer cells. Presents nucleobase carbonyl adducts generated during oxidative stress. Captures M3Ade, a nucleobase adduct composed of one adenine modified by a malondialdehyde trimer, for recognition by MR1-restricted T cell clones expressing a polyclonal TCR repertoire. The polypeptide is Major histocompatibility complex class I-related protein 1 (Mus musculus (Mouse)).